The following is a 193-amino-acid chain: Ion-translocating oxidoreductase complex subunit A (193 aa).

6 helical membrane passes run 5 to 25 (LLLLIGTVLVNNFVLVKFLGL), 39 to 59 (IGMGLATTFVLTLASVCSYLV), 67 to 87 (LGIEYLRTMSFILVIAVVVQF), 102 to 122 (VLGIFLPLITTNCAVLGVALL), 134 to 154 (IIYGFGAAVGFSLVLILFSAM), and 171 to 191 (SIAMITAGLMSLAFMGFTGLV).

The protein belongs to the NqrDE/RnfAE family. As to quaternary structure, the complex is composed of six subunits: RnfA, RnfB, RnfC, RnfD, RnfE and RnfG.

It is found in the cell inner membrane. Functionally, part of a membrane-bound complex that couples electron transfer with translocation of ions across the membrane. The protein is Ion-translocating oxidoreductase complex subunit A of Aliivibrio fischeri (strain ATCC 700601 / ES114) (Vibrio fischeri).